A 481-amino-acid polypeptide reads, in one-letter code: UDP-glycosyltransferase 73B3 (481 aa).

His21 acts as the Proton acceptor in catalysis. Residue His21 coordinates an anthocyanidin. Asp132 (charge relay) is an active-site residue. The UDP-alpha-D-glucose site is built by Ala355, Gln357, His372, Trp375, Asn376, Ser377, and Glu380. Ala395 serves as a coordination point for an anthocyanidin. UDP-alpha-D-glucose contacts are provided by Glu396 and Gln397.

This sequence belongs to the UDP-glycosyltransferase family. In terms of tissue distribution, expressed in roots and flowers.

It carries out the reaction a flavonol + UDP-alpha-D-glucose = a flavonol 3-O-beta-D-glucoside + UDP + H(+). Its function is as follows. Possesses quercetin 3-O-glucosyltransferase activity in vitro. Also active in vitro on benzoates and benzoate derivatives. Involved in stress or defense responses. This is UDP-glycosyltransferase 73B3 (UGT73B3) from Arabidopsis thaliana (Mouse-ear cress).